Here is a 523-residue protein sequence, read N- to C-terminus: Frizzled-4 (523 aa).

The N-terminal stretch at 1–22 (MGARSLTLLYLLCCLVVGLIAG) is a signal peptide. The Extracellular segment spans residues 23-198 (FGEEEERSCD…KCGYDSGLYN (176 aa)). Residues 26-147 (EEERSCDPIR…NDHNHMCMEG (122 aa)) enclose the FZ domain. 8 cysteine pairs are disulfide-bonded: Cys-31–Cys-92, Cys-39–Cys-85, Cys-76–Cys-114, Cys-103–Cys-144, Cys-107–Cys-131, Cys-167–Cys-186, Cys-190–Cys-268, and Cys-288–Cys-363. Asn-45 carries N-linked (GlcNAc...) asparagine glycosylation. An N-linked (GlcNAc...) asparagine glycan is attached at Asn-130. Residues 199–229 (RLSKEFTDIWMAVWASLCFISTAFTVLTFLI) form a helical membrane-spanning segment. Residues 230–235 (DSSRFC) are Cytoplasmic-facing. A helical membrane pass occupies residues 236–261 (YPERPIIFLSMCYNIYSIAYIVRLTV). At 262–285 (GRERISCDFEEAAEPVLIQEGLKN) the chain is on the extracellular side. The helical transmembrane segment at 286 to 319 (TGCAIIFLLMYFFGMASSIWWVILTLTWFLAAGL) threads the bilayer. Residues 320–322 (KWG) lie on the Cytoplasmic side of the membrane. A helical membrane pass occupies residues 323-351 (HEAIEMHSSYFHIAAWAIPAVKTIVILIM). Over 352–369 (RLVDADELTGLCYVGNQN) the chain is Extracellular. Residues 370 to 396 (IDALTGFVVAPLFTYLVIGTLFIAAGL) traverse the membrane as a helical segment. At 397–417 (VALFKIRSNLQKDGTKTDKLE) the chain is on the cytoplasmic side. A helical membrane pass occupies residues 418 to 443 (RLMVKIGVFSVLYTVPATCVIACYFY). Residues 444–459 (EVSNWNVFRYTADDSN) lie on the Extracellular side of the membrane. A helical membrane pass occupies residues 460 to 481 (MAVEMLNIFMSLLVGITSGMWI). Topologically, residues 482–523 (WSAKTLHTWQKCTNRLVNSGKVKRKKRVDGWVKPGKGNETVV) are cytoplasmic. The Lys-Thr-X-X-X-Trp motif, mediates interaction with the PDZ domain of Dvl family members signature appears at 485–490 (KTLHTW). A PDZ-binding motif is present at residues 521–523 (TVV).

It belongs to the G-protein coupled receptor Fz/Smo family. As to quaternary structure, interacts (via FZ domain) with tsku; tsku competes with wnt2b for binding to fzd4, inhibiting Wnt signaling and repressing peripheral eye development.

It localises to the cell membrane. Receptor for Wnt proteins. Most frizzled receptors are coupled to the beta-catenin canonical signaling pathway, which leads to the activation of disheveled proteins, inhibition of GSK-3 kinase, nuclear accumulation of beta-catenin and activation of Wnt target genes. A second signaling pathway involving PKC and calcium fluxes has been seen for some family members, but it is not yet clear if it represents a distinct pathway or if it can be integrated in the canonical pathway, as PKC seems to be required for Wnt-mediated inactivation of GSK-3 kinase. Both pathways seem to involve interactions with G-proteins. May be involved in transduction and intercellular transmission of polarity information during tissue morphogenesis and/or in differentiated tissues. Activated by Wnt5A. The protein is Frizzled-4 (fzd4) of Xenopus laevis (African clawed frog).